Reading from the N-terminus, the 373-residue chain is Dual-specificity RNA methyltransferase RlmN (373 aa).

Glu-104 (proton acceptor) is an active-site residue. The 240-residue stretch at 110-349 (KNQRTTLCIS…VTIRKIRGYD (240 aa)) folds into the Radical SAM core domain. A disulfide bridge connects residues Cys-117 and Cys-354. [4Fe-4S] cluster is bound by residues Cys-124, Cys-128, and Cys-131. S-adenosyl-L-methionine is bound by residues 178-179 (GE), Ser-210, 232-234 (SLH), and Asn-311. The S-methylcysteine intermediate role is filled by Cys-354.

The protein belongs to the radical SAM superfamily. RlmN family. The cofactor is [4Fe-4S] cluster.

The protein resides in the cytoplasm. It carries out the reaction adenosine(2503) in 23S rRNA + 2 reduced [2Fe-2S]-[ferredoxin] + 2 S-adenosyl-L-methionine = 2-methyladenosine(2503) in 23S rRNA + 5'-deoxyadenosine + L-methionine + 2 oxidized [2Fe-2S]-[ferredoxin] + S-adenosyl-L-homocysteine. The enzyme catalyses adenosine(37) in tRNA + 2 reduced [2Fe-2S]-[ferredoxin] + 2 S-adenosyl-L-methionine = 2-methyladenosine(37) in tRNA + 5'-deoxyadenosine + L-methionine + 2 oxidized [2Fe-2S]-[ferredoxin] + S-adenosyl-L-homocysteine. Specifically methylates position 2 of adenine 2503 in 23S rRNA and position 2 of adenine 37 in tRNAs. m2A2503 modification seems to play a crucial role in the proofreading step occurring at the peptidyl transferase center and thus would serve to optimize ribosomal fidelity. This chain is Dual-specificity RNA methyltransferase RlmN, found in Buchnera aphidicola subsp. Baizongia pistaciae (strain Bp).